We begin with the raw amino-acid sequence, 603 residues long: DNA mismatch repair protein MutL (603 aa).

A disordered region spans residues 361–383 (KETPTLFSKPTIPEYVPSDEDAP).

This sequence belongs to the DNA mismatch repair MutL/HexB family.

Functionally, this protein is involved in the repair of mismatches in DNA. It is required for dam-dependent methyl-directed DNA mismatch repair. May act as a 'molecular matchmaker', a protein that promotes the formation of a stable complex between two or more DNA-binding proteins in an ATP-dependent manner without itself being part of a final effector complex. This is DNA mismatch repair protein MutL from Listeria monocytogenes serotype 4b (strain CLIP80459).